Here is a 2602-residue protein sequence, read N- to C-terminus: Non-reducing polyketide synthase SAT8 (2602 aa).

Cys130 functions as the Nucleophile; for transacylase activity in the catalytic mechanism. His249 acts as the Proton donor/acceptor; for transacylase activity in catalysis. The segment at 379–398 (MLENSTSPPSPAATSSNSHC) is disordered. Low complexity predominate over residues 382-396 (NSTSPPSPAATSSNS). One can recognise a Ketosynthase family 3 (KS3) domain in the interval 404 to 822 (PRDIAIVGMS…GSNAAMVVTQ (419 aa)). Catalysis depends on for beta-ketoacyl synthase activity residues Cys571, His706, and His745. The segment at 926-1216 (FGGQMSTFVG…AMARRSLDSN (291 aa)) is malonyl-CoA:ACP transacylase (MAT). The interval 1298 to 1442 (GPLFGLLTFV…GKLDLLSSSE (145 aa)) is N-terminal hotdog fold. Positions 1298–1618 (GPLFGLLTFV…YTRIPRHSMT (321 aa)) constitute a PKS/mFAS DH domain. The product template (PT) domain stretch occupies residues 1331–1616 (LVIPHIIART…IAYTRIPRHS (286 aa)). The Proton acceptor; for dehydratase activity role is filled by His1335. Positions 1467–1618 (GDVSGLQGRS…YTRIPRHSMT (152 aa)) are C-terminal hotdog fold. The active-site Proton donor; for dehydratase activity is the Asp1524. Residues 1658 to 1733 (DTLKQTVGQI…AFVRYISKVV (76 aa)) enclose the Carrier domain. Ser1692 is subject to O-(pantetheine 4'-phosphoryl)serine. A disordered region spans residues 1737–1772 (DDLGTPSHSDNDSHVTGTTATPNSSSASSDTHHGNS). Low complexity predominate over residues 1752-1765 (TGTTATPNSSSASS). Residues 1979 to 2150 (VEKVKDDFQG…GYGHVDWTDG (172 aa)) are methyltransferase domain. The NADPH-binding domain stretch occupies residues 2229-2530 (IVVVTGATGS…IPLGEWVRKV (302 aa)).

The cofactor is pantetheine 4'-phosphate.

Its pathway is mycotoxin biosynthesis. Its function is as follows. Non-reducing polyketide synthase; part of the satratoxin SC1 cluster involved in the biosynthesis of satratoxins, trichothecene mycotoxins that are associated with human food poisonings. Satratoxins are suggested to be made by products of multiple gene clusters (SC1, SC2 and SC3) that encode 21 proteins in all, including polyketide synthases, acetyltransferases, and other enzymes expected to modify the trichothecene skeleton. SC1 encodes 10 proteins, SAT1 to SAT10. The largest are SAT8, which encodes a putative polyketide synthase (PKS) with a conventional non-reducing architecture, and SAT10, a putative protein containing four ankyrin repeats and thus may be involved in protein scaffolding. The putative short-chain reductase SAT3 may assist the PKS in some capacity. SAT6 contains a secretory lipase domain and acts probably as a trichothecene esterase. SAT5 encodes a putative acetyltransferase, and so, with SAT6, may affect endogenous protection from toxicity. The probable transcription factor SAT9 may regulate the expression of the SC1 cluster. SC2 encodes proteins SAT11 to SAT16, the largest of which encodes the putative reducing PKS SAT13. SAT11 is a cytochrome P450 monooxygenase, while SAT14 and SAT16 are probable acetyltransferases. The SC2 cluster may be regulated by the transcription factor SAT15. SC3 is a small cluster that encodes 5 proteins, SAT17 to SAT21. SAT21 is a putative MFS-type transporter which may have a role in exporting secondary metabolites. The four other proteins putatively encoded in SC3 include the taurine hydroxylase-like protein SAT17, the O-methyltransferase SAT18, the acetyltransferase SAT19, and the Cys6-type zinc finger SAT20, the latter being probably involved in regulation of SC3 expression. The sequence is that of Non-reducing polyketide synthase SAT8 from Stachybotrys chartarum (strain CBS 109288 / IBT 7711) (Toxic black mold).